The sequence spans 124 residues: Large ribosomal subunit protein bL21 (124 aa).

This sequence belongs to the bacterial ribosomal protein bL21 family. In terms of assembly, part of the 50S ribosomal subunit. Contacts protein L20.

Its function is as follows. This protein binds to 23S rRNA in the presence of protein L20. The chain is Large ribosomal subunit protein bL21 from Synechococcus sp. (strain WH7803).